Reading from the N-terminus, the 255-residue chain is Ribonuclease PH (255 aa).

Residues arginine 86 and 124 to 126 (GTR) each bind phosphate.

The protein belongs to the RNase PH family. In terms of assembly, homohexameric ring arranged as a trimer of dimers.

It carries out the reaction tRNA(n+1) + phosphate = tRNA(n) + a ribonucleoside 5'-diphosphate. Phosphorolytic 3'-5' exoribonuclease that plays an important role in tRNA 3'-end maturation. Removes nucleotide residues following the 3'-CCA terminus of tRNAs; can also add nucleotides to the ends of RNA molecules by using nucleoside diphosphates as substrates, but this may not be physiologically important. Probably plays a role in initiation of 16S rRNA degradation (leading to ribosome degradation) during starvation. The protein is Ribonuclease PH of Hydrogenobaculum sp. (strain Y04AAS1).